The sequence spans 245 residues: 1-(5-phosphoribosyl)-5-[(5-phosphoribosylamino)methylideneamino] imidazole-4-carboxamide isomerase (245 aa).

The Proton acceptor role is filled by Asp-7. Asp-129 functions as the Proton donor in the catalytic mechanism.

This sequence belongs to the HisA/HisF family.

It is found in the cytoplasm. It catalyses the reaction 1-(5-phospho-beta-D-ribosyl)-5-[(5-phospho-beta-D-ribosylamino)methylideneamino]imidazole-4-carboxamide = 5-[(5-phospho-1-deoxy-D-ribulos-1-ylimino)methylamino]-1-(5-phospho-beta-D-ribosyl)imidazole-4-carboxamide. It functions in the pathway amino-acid biosynthesis; L-histidine biosynthesis; L-histidine from 5-phospho-alpha-D-ribose 1-diphosphate: step 4/9. This Salmonella arizonae (strain ATCC BAA-731 / CDC346-86 / RSK2980) protein is 1-(5-phosphoribosyl)-5-[(5-phosphoribosylamino)methylideneamino] imidazole-4-carboxamide isomerase.